We begin with the raw amino-acid sequence, 362 residues long: Talin rod domain-containing protein 1 (362 aa).

Residues 1-27 form a disordered region; that stretch reads MASGSAGKPTGEAASPAPGSAVGGASS. Ala2 is modified (N-acetylalanine). Low complexity predominate over residues 9–27; it reads PTGEAASPAPGSAVGGASS.

May homodimerize. Interacts with F-actin. As to expression, ubiquitous.

In terms of biological role, actin-binding protein which may have an oncogenic function and regulates cell proliferation, migration and invasion in cancer cells. This Mus musculus (Mouse) protein is Talin rod domain-containing protein 1.